A 690-amino-acid polypeptide reads, in one-letter code: MEKILQMAEGIDIGEMPSYDLVLSKPSKGQKRHLSTCDGQNPPKKQAGSKFHARPRFEPVHFVASSSKDERQEDPYGPQTKEVNEQTHFASMPRDIYQDYTQDSFSIQDGNSQYCDSSGFILTKDQPVTANMYFDSGNPAPSTTSQQANSQSTPEPSPSQTFPESVVAEKQYFIEKLTATIWKNLSNPEMTSGSDKINYTYMLTRCIQACKTNPEYIYAPLKEIPPADIPKNKKLLTDGYACEVRCQNIYLTTGYAGSKNGSRDRATELAVKLLQKRIEVRVVRRKFKHTFGEDLVVCQIGMSSYEFPPALKPPEDLVVLGKDASGQPIFNASAKHWTNFVITENANDAIGILNNSASFNKMSIEYKYEMMPNRTWRCRVFLQDHCLAEGYGTKKTSKHAAADEALKILQKTQPTYPSVKSSQCHTGSSPRGSGKKKDIKDLVVYENSSNPVCTLNDTAQFNRMTVEYVYERMTGLRWKCKVILESEVIAEAVGVKKTVKYEAAGEAVKTLKKTQPTVINNLKKGAVEDVISRNEIQGRSAEEAYKQQIKEDNIGNQLLRKMGWTGGGLGKSGEGIREPISVKEQHKREGLGLDVERVNKIAKRDIEQIIRNYARSESHTDLTFSRELTNDERKQIHQIAQKYGLKSKSHGVGHDRYLVVGRKRRKEDLLDQLKQEGQVGHYELVMPQAN.

The interval 1-296 (MEKILQMAEG…FKHTFGEDLV (296 aa)) is active repression domain. The short motif at 25–45 (KPSKGQKRHLSTCDGQNPPKK) is the Nuclear localization signal element. Disordered stretches follow at residues 27-87 (SKGQ…NEQT) and 132-163 (MYFD…QTFP). K68 participates in a covalent cross-link: Glycyl lysine isopeptide (Lys-Gly) (interchain with G-Cter in SUMO2). A compositionally biased stretch (low complexity) spans 142–163 (STTSQQANSQSTPEPSPSQTFP). Residues 296–388 (VVCQIGMSSY…RVFLQDHCLA (93 aa)) mediate DNA binding. Positions 414-431 (PTYPSVKSSQCHTGSSPR) are enriched in polar residues. The interval 414 to 437 (PTYPSVKSSQCHTGSSPRGSGKKK) is disordered. Residue K500 forms a Glycyl lysine isopeptide (Lys-Gly) (interchain with G-Cter in SUMO2) linkage. Residues 551 to 596 (EDNIGNQLLRKMGWTGGGLGKSGEGIREPISVKEQHKREGLGLDVE) enclose the G-patch domain. Residues 600 to 664 (KIAKRDIEQI…DRYLVVGRKR (65 aa)) enclose the R3H domain. S618 is subject to Phosphoserine. Residues K666 and K674 each participate in a glycyl lysine isopeptide (Lys-Gly) (interchain with G-Cter in SUMO2) cross-link.

As to quaternary structure, interacts with NF-kappa-B. Interacts with XRN2. Interacts (via G-patch domain) with DHX15; promoting the RNA helicase activity of DHX15. As to expression, widely and constitutively expressed. Expressed at lower level in colon, peripheral blood lymphocytes, lung and kidney.

It is found in the nucleus. It localises to the nucleolus. Enhances the ATPase activity of DHX15 by acting like a brace that tethers mobile sections of DHX15 together, stabilizing a functional conformation with high RNA affinity of DHX15. Involved in the constitutive silencing of the interferon beta promoter, independently of the virus-induced signals, and in the inhibition of the basal and cytokine-induced iNOS promoter activity. Also involved in the regulation of IL-8 transcription. May also act as a DNA-binding transcription regulator: interacts with a specific negative regulatory element (NRE) 5'-AATTCCTCTGA-3' to mediate transcriptional repression of certain NK-kappa-B responsive genes. This Homo sapiens (Human) protein is NF-kappa-B-repressing factor.